Reading from the N-terminus, the 84-residue chain is Small ribosomal subunit protein uS17 (84 aa).

This sequence belongs to the universal ribosomal protein uS17 family. In terms of assembly, part of the 30S ribosomal subunit.

Functionally, one of the primary rRNA binding proteins, it binds specifically to the 5'-end of 16S ribosomal RNA. This Alkaliphilus metalliredigens (strain QYMF) protein is Small ribosomal subunit protein uS17.